Reading from the N-terminus, the 369-residue chain is Choline-phosphate cytidylyltransferase B (369 aa).

Positions 1–27 (MPVVTTDAESETGIPKSLSNEPPSETM) are disordered. CTP-binding residues include Ile84, Phe85, His92, and Lys122. Positions 122 and 151 each coordinate phosphocholine. Positions 168, 169, 173, 195, 196, 197, and 200 each coordinate CTP. Residues 309–369 (RMLQALSPKQ…SMSEGDEDEK (61 aa)) are disordered. A phosphoserine mark is found at Ser315, Ser319, Ser322, Ser323, Ser329, Ser331, and Ser335. A compositionally biased stretch (low complexity) spans 319-339 (SPVSSPTRSRSPSRSPSPTFS). Thr345 carries the phosphothreonine modification. 6 positions are modified to phosphoserine: Ser346, Ser349, Ser350, Ser355, Ser360, and Ser362. Positions 351-362 (PKAASASISSMS) are enriched in low complexity.

The protein belongs to the cytidylyltransferase family. Homodimer. Phosphorylated. Post-translationally, extensively phosphorylated. Highly expressed in testis, placenta, brain, ovary, liver and fetal lung. In terms of tissue distribution, expressed in brain, liver and fetal lung.

The protein localises to the cytoplasm. The protein resides in the endoplasmic reticulum. The catalysed reaction is phosphocholine + CTP + H(+) = CDP-choline + diphosphate. Its pathway is phospholipid metabolism; phosphatidylcholine biosynthesis; phosphatidylcholine from phosphocholine: step 1/2. Catalyzes the key rate-limiting step in the CDP-choline pathway for phosphatidylcholine biosynthesis. This Homo sapiens (Human) protein is Choline-phosphate cytidylyltransferase B (PCYT1B).